The chain runs to 337 residues: Glyceraldehyde-3-phosphate dehydrogenase (337 aa).

NAD(+)-binding positions include 12–13, Asp-36, Arg-80, and Ser-122; that span reads RI. Residues 153 to 155 and Thr-184 contribute to the D-glyceraldehyde 3-phosphate site; that span reads SCT. Cys-154 (nucleophile) is an active-site residue. Asn-185 is an NAD(+) binding site. Residues Arg-199, 212–213, and Arg-235 contribute to the D-glyceraldehyde 3-phosphate site; that span reads TG. Asn-318 contributes to the NAD(+) binding site.

The protein belongs to the glyceraldehyde-3-phosphate dehydrogenase family. As to quaternary structure, homotetramer.

It is found in the cytoplasm. The enzyme catalyses D-glyceraldehyde 3-phosphate + phosphate + NAD(+) = (2R)-3-phospho-glyceroyl phosphate + NADH + H(+). The protein operates within carbohydrate degradation; glycolysis; pyruvate from D-glyceraldehyde 3-phosphate: step 1/5. Functionally, catalyzes the oxidative phosphorylation of glyceraldehyde 3-phosphate (G3P) to 1,3-bisphosphoglycerate (BPG) using the cofactor NAD. The first reaction step involves the formation of a hemiacetal intermediate between G3P and a cysteine residue, and this hemiacetal intermediate is then oxidized to a thioester, with concomitant reduction of NAD to NADH. The reduced NADH is then exchanged with the second NAD, and the thioester is attacked by a nucleophilic inorganic phosphate to produce BPG. The sequence is that of Glyceraldehyde-3-phosphate dehydrogenase (gap) from Zymomonas mobilis subsp. mobilis (strain ATCC 31821 / ZM4 / CP4).